Reading from the N-terminus, the 220-residue chain is MTKGILGRKIGMTQVFGENGDLIPVTVVEAGQNVVLQKKTEEVDGYNAIQVGFEDKQAYKKDSKSNKYANKPAEGHAKKAGTAPKRFIREFKNINVDEYEVGQEVSVDTFEAGDIIDVTGVSKGKGFQGNIKRHGHARGPMAHGSHFHRAPGSVGMASDASKVFKGHKMPGRMGGNTVTVQNLEVVQIDAENNVILVKGNVPGPKKGLVEIKTSIKKGNK.

This sequence belongs to the universal ribosomal protein uL3 family. In terms of assembly, part of the 50S ribosomal subunit. Forms a cluster with proteins L14 and L19.

Functionally, one of the primary rRNA binding proteins, it binds directly near the 3'-end of the 23S rRNA, where it nucleates assembly of the 50S subunit. This Staphylococcus carnosus (strain TM300) protein is Large ribosomal subunit protein uL3.